A 182-amino-acid chain; its full sequence is Small ribosomal subunit protein uS4c (182 aa).

The 62-residue stretch at Met82–Asn143 folds into the S4 RNA-binding domain.

Belongs to the universal ribosomal protein uS4 family. As to quaternary structure, part of the 30S ribosomal subunit. Contacts protein S5. The interaction surface between S4 and S5 is involved in control of translational fidelity.

Its subcellular location is the plastid. It is found in the chloroplast. Functionally, one of the primary rRNA binding proteins, it binds directly to 16S rRNA where it nucleates assembly of the body of the 30S subunit. Its function is as follows. With S5 and S12 plays an important role in translational accuracy. The chain is Small ribosomal subunit protein uS4c (rps4) from Alophia veracruzana (Mexican pine woods lily).